Consider the following 284-residue polypeptide: Succinate dehydrogenase [ubiquinone] iron-sulfur subunit, mitochondrial (284 aa).

The transit peptide at 1–26 (MAAVVFSLRRSGPVFRLPGVLQVCRG) directs the protein to the mitochondrion. Positions 44-137 (KKFAIYRWDP…VSKIYPLPHM (94 aa)) constitute a 2Fe-2S ferredoxin-type domain. Residues Cys-97, Cys-102, Cys-105, and Cys-117 each coordinate [2Fe-2S] cluster. In terms of domain architecture, 4Fe-4S ferredoxin-type spans 180–210 (DRDKLDGLYECILCACCSTSCPSYWWNADKY). 3 residues coordinate [4Fe-4S] cluster: Cys-190, Cys-193, and Cys-196. Residue Cys-200 participates in [3Fe-4S] cluster binding. Trp-205 serves as a coordination point for a ubiquinone. Cys-247 and Cys-253 together coordinate [3Fe-4S] cluster. Cys-257 is a [4Fe-4S] cluster binding site.

It belongs to the succinate dehydrogenase/fumarate reductase iron-sulfur protein family. As to quaternary structure, component of complex II composed of four subunits: the flavoprotein (FP) sdha, iron-sulfur protein (IP) sdhb, and a cytochrome b composed of sdhc and sdhd. It depends on [2Fe-2S] cluster as a cofactor. [3Fe-4S] cluster serves as cofactor. Requires [4Fe-4S] cluster as cofactor.

Its subcellular location is the mitochondrion inner membrane. The catalysed reaction is a quinone + succinate = fumarate + a quinol. The enzyme catalyses (R)-malate + a quinone = enol-oxaloacetate + a quinol. It catalyses the reaction (S)-malate + a quinone = enol-oxaloacetate + a quinol. The protein operates within carbohydrate metabolism; tricarboxylic acid cycle; fumarate from succinate (eukaryal route): step 1/1. Enol-oxaloacetate inhibits the succinate dehydrogenase activity. In terms of biological role, iron-sulfur protein (IP) subunit of the succinate dehydrogenase complex (mitochondrial respiratory chain complex II), responsible for transferring electrons from succinate to ubiquinone (coenzyme Q). SDH also oxidizes malate to the non-canonical enol form of oxaloacetate, enol-oxaloacetate. Enol-oxaloacetate, which is a potent inhibitor of the succinate dehydrogenase activity, is further isomerized into keto-oxaloacetate. The sequence is that of Succinate dehydrogenase [ubiquinone] iron-sulfur subunit, mitochondrial (sdhb) from Xenopus tropicalis (Western clawed frog).